The chain runs to 308 residues: Ribonuclease HIII (308 aa).

The RNase H type-2 domain maps to Lys-91 to Lys-308. Asp-97, Glu-98, and Asp-202 together coordinate a divalent metal cation.

It belongs to the RNase HII family. RnhC subfamily. Mn(2+) is required as a cofactor. It depends on Mg(2+) as a cofactor.

The protein localises to the cytoplasm. The catalysed reaction is Endonucleolytic cleavage to 5'-phosphomonoester.. Its function is as follows. Endonuclease that specifically degrades the RNA of RNA-DNA hybrids. This chain is Ribonuclease HIII, found in Listeria monocytogenes serotype 4b (strain CLIP80459).